The sequence spans 274 residues: Coagulation factor IX (274 aa).

Tyrosine 23 is modified (sulfotyrosine). N-linked (GlcNAc...) asparagine glycosylation occurs at asparagine 25. Serine 26 is subject to Phosphoserine. Residue asparagine 35 is glycosylated (N-linked (GlcNAc...) asparagine). Threonine 37 is a glycosylation site (O-linked (GalNAc...) threonine). A glycan (N-linked (GlcNAc...) asparagine) is linked at asparagine 40. Residues valine 49–valine 274 form the Peptidase S1 domain. Cysteine 74 and cysteine 90 are oxidised to a cystine. The active-site Charge relay system is the histidine 89. Residues glutamate 103, asparagine 105, glutamate 110, and glutamate 113 each contribute to the Ca(2+) site. Asparagine 128 carries N-linked (GlcNAc...) asparagine glycosylation. Aspartate 137 (charge relay system) is an active-site residue. 2 cysteine pairs are disulfide-bonded: cysteine 204–cysteine 218 and cysteine 229–cysteine 257. Catalysis depends on serine 233, which acts as the Charge relay system.

It belongs to the peptidase S1 family. Heterodimer of a light chain and a heavy chain; disulfide-linked. Interacts (inactive and activated) with F11 (activated) in calcium-dependent manner. Interacts with SERPINC1. In terms of processing, activated by factor XIa, which excises the activation peptide. The propeptide can also be removed by snake venom protease. Activated by coagulation factor VIIa-tissue factor (F7-F3) complex in calcium-dependent manner.

It localises to the secreted. The catalysed reaction is Selective cleavage of Arg-|-Ile bond in factor X to form factor Xa.. Factor IX is a vitamin K-dependent plasma protein that participates in the intrinsic pathway of blood coagulation by converting factor X to its active form in the presence of Ca(2+) ions, phospholipids, and factor VIIIa. This is Coagulation factor IX (F9) from Ovis aries (Sheep).